The sequence spans 123 residues: MKTKLGFNRLSRKSSHRRALLKNMVISFFKHEKISSTKTKLFEVKRFAERLITRAKVDTVHNRRELSKFIHDKHILNKLFTKISPVFRQRSGGYTRMIKLGKRYGDAAEMAILELVEKPLKVE.

It belongs to the bacterial ribosomal protein bL17 family. Part of the 50S ribosomal subunit. Contacts protein L32.

In Borreliella burgdorferi (strain ATCC 35210 / DSM 4680 / CIP 102532 / B31) (Borrelia burgdorferi), this protein is Large ribosomal subunit protein bL17.